We begin with the raw amino-acid sequence, 622 residues long: Polyamine transporter 3 (622 aa).

Positions 1-47 (MNRQESINSFNSDETSSLSDVESQQPQQYIPSESGSKSNMAPNQLKL) are enriched in polar residues. The tract at residues 1–76 (MNRQESINSF…VPDVNAPQSS (76 aa)) is disordered. Residues 1 to 182 (MNRQESINSF…WPAWIRWSYT (182 aa)) are Cytoplasmic-facing. Residue serine 55 is modified to Phosphoserine. Threonine 98 bears the Phosphothreonine mark. 2 positions are modified to phosphoserine: serine 101 and serine 132. The disordered stretch occupies residues 105–152 (TSTAISRTRTRQIDGASSPSSNEDALESDNNEKGKEGDSSGANDEAPD). A helical membrane pass occupies residues 183-203 (VLLSILVICVAYGSACISGGL). The Extracellular portion of the chain corresponds to 204-215 (GTVEKKYHVGME). The chain crosses the membrane as a helical span at residues 216–236 (AAILSVSLMVIGFSLGPLIWS). Topologically, residues 237 to 245 (PVSDLYGRR) are cytoplasmic. The helical transmembrane segment at 246–266 (VAYFVSMGLYVIFNIPCALAP) threads the bilayer. The Extracellular portion of the chain corresponds to 267–275 (NLGSLLACR). The helical transmembrane segment at 276 to 296 (FLCGVWSSSGLCLVGGSIADM) threads the bilayer. Residues 297–305 (FPSETRGKA) are Cytoplasmic-facing. A helical transmembrane segment spans residues 306 to 326 (IAFFAFAPYVGPVVGPLVNGF). Over 327–335 (ISVSTGRMD) the chain is Extracellular. Residues 336–356 (LIFWVNMAFAGVMWIISSAIP) traverse the membrane as a helical segment. Over 357 to 416 (ETYAPVILKRKAARLRKETGNPKIMTEQEAQGVSMGEMMRACLLRPLYFSVTEPVLVATC) the chain is Cytoplasmic. Residues 417–437 (FYVCLIYSLLYAFFFAFPVIF) traverse the membrane as a helical segment. The Extracellular portion of the chain corresponds to 438 to 446 (GELYGYKDN). Residues 447–467 (LVGLMFIPIVIGALWALATTF) form a helical membrane-spanning segment. The Cytoplasmic segment spans residues 468–487 (YCENKYLQIVKQRKPTPEDR). Residues 488–508 (LLGAKIGAPFAAIALWILGAT) form a helical membrane-spanning segment. The Extracellular portion of the chain corresponds to 509–512 (AYKH). The helical transmembrane segment at 513–533 (IIWVGPASAGLAFGFGMVLIY) threads the bilayer. The Cytoplasmic segment spans residues 534-550 (YSLNNYIIDCYVQYASS). A helical transmembrane segment spans residues 551–571 (ALATKVFLRSAGGAAFPLFTI). Topologically, residues 572-583 (QMYHKLNLHWGS) are extracellular. Residues 584–604 (WLLAFISTAMIALPFAFSYWG) form a helical membrane-spanning segment. Over 605–622 (KGLRHKLSKKDYSIDSIE) the chain is Cytoplasmic.

It belongs to the major facilitator superfamily. DHA1 family. Polyamines/proton antiporter (TC 2.A.1.2.16) subfamily.

It localises to the cell membrane. Its function is as follows. Cell membrane polyamine/proton antiporter, involved in the detoxification of excess polyamines in the cytoplasm. Recognizes spermine, but not spermidine. This chain is Polyamine transporter 3 (TPO3), found in Saccharomyces cerevisiae (strain ATCC 204508 / S288c) (Baker's yeast).